The primary structure comprises 325 residues: Eukaryotic translation initiation factor 3 subunit I (325 aa).

WD repeat units lie at residues methionine 1–serine 39, glutamate 43–cysteine 81, leucine 87–leucine 127, asparagine 135–alanine 175, and valine 180–serine 217. Threonine 219 carries the post-translational modification Phosphothreonine. WD repeat units follow at residues glutamate 221–alanine 267 and glutamate 275–proline 316. Lysine 264 bears the N6-acetyllysine mark. Lysine 282 participates in a covalent cross-link: Glycyl lysine isopeptide (Lys-Gly) (interchain with G-Cter in ubiquitin). A Phosphotyrosine modification is found at tyrosine 308.

Component of the eukaryotic translation initiation factor 3 (eIF-3) complex, which is composed of 13 subunits: EIF3A, EIF3B, EIF3C, EIF3D, EIF3E, EIF3F, EIF3G, EIF3H, EIF3I, EIF3J, EIF3K, EIF3L and EIF3M. The eIF-3 complex appears to include 3 stable modules: module A is composed of EIF3A, EIF3B, EIF3G and EIF3I; module B is composed of EIF3F, EIF3H, and EIF3M; and module C is composed of EIF3C, EIF3D, EIF3E, EIF3K and EIF3L. EIF3C of module C binds EIF3B of module A and EIF3H of module B, thereby linking the three modules. EIF3J is a labile subunit that binds to the eIF-3 complex via EIF3B. The eIF-3 complex interacts with RPS6KB1 under conditions of nutrient depletion. Mitogenic stimulation leads to binding and activation of a complex composed of MTOR and RPTOR, leading to phosphorylation and release of RPS6KB1 and binding of EIF4B to eIF-3. Phosphorylated by TGF-beta type II receptor.

The protein resides in the cytoplasm. In terms of biological role, component of the eukaryotic translation initiation factor 3 (eIF-3) complex, which is required for several steps in the initiation of protein synthesis. The eIF-3 complex associates with the 40S ribosome and facilitates the recruitment of eIF-1, eIF-1A, eIF-2:GTP:methionyl-tRNAi and eIF-5 to form the 43S pre-initiation complex (43S PIC). The eIF-3 complex stimulates mRNA recruitment to the 43S PIC and scanning of the mRNA for AUG recognition. The eIF-3 complex is also required for disassembly and recycling of post-termination ribosomal complexes and subsequently prevents premature joining of the 40S and 60S ribosomal subunits prior to initiation. The eIF-3 complex specifically targets and initiates translation of a subset of mRNAs involved in cell proliferation, including cell cycling, differentiation and apoptosis, and uses different modes of RNA stem-loop binding to exert either translational activation or repression. In Homo sapiens (Human), this protein is Eukaryotic translation initiation factor 3 subunit I.